A 581-amino-acid chain; its full sequence is Arginine--tRNA ligase (581 aa).

A 'HIGH' region motif is present at residues 126–136; the sequence is PNLAKEMHVGH.

It belongs to the class-I aminoacyl-tRNA synthetase family. Monomer.

The protein resides in the cytoplasm. The catalysed reaction is tRNA(Arg) + L-arginine + ATP = L-arginyl-tRNA(Arg) + AMP + diphosphate. The chain is Arginine--tRNA ligase from Shewanella pealeana (strain ATCC 700345 / ANG-SQ1).